A 468-amino-acid polypeptide reads, in one-letter code: Membrane-associated tyrosine- and threonine-specific cdc2-inhibitory kinase wee-1.1 (468 aa).

Positions 25-42 are enriched in basic and acidic residues; that stretch reads SKDEPNKLNTSRKLEVTT. Positions 25-63 are disordered; sequence SKDEPNKLNTSRKLEVTTKKNQSNNKKRPPPINKARKSL. Basic residues predominate over residues 49-61; it reads NKKRPPPINKARK. A Protein kinase domain is found at 106–357; that stretch reads FNFDKNLGKG…SELMKNHVVK (252 aa). ATP is bound by residues 112–120 and Lys135; that span reads LGKGSFGEV. Residue Asp224 is the Proton acceptor of the active site. 2 residues coordinate Mg(2+): Asn229 and Asp242. The tract at residues 425–453 is disordered; it reads EDEYEVFSPPRTPVKKSRYQQTMPEVSPP.

The protein belongs to the protein kinase superfamily. Ser/Thr protein kinase family. WEE1 subfamily. As to expression, in the 12-13-cell embryo, expressed in the E blastomere. In the 16-cell embryo, expressed in the eight AB cells.

The protein localises to the nucleus. It carries out the reaction L-seryl-[protein] + ATP = O-phospho-L-seryl-[protein] + ADP + H(+). The enzyme catalyses L-threonyl-[protein] + ATP = O-phospho-L-threonyl-[protein] + ADP + H(+). Its function is as follows. Acts as a negative regulator of entry into mitosis (G2 to M transition) by phosphorylation of the CDK1 kinase. The protein is Membrane-associated tyrosine- and threonine-specific cdc2-inhibitory kinase wee-1.1 (wee-1.1) of Caenorhabditis elegans.